The primary structure comprises 198 residues: Elongation factor Ts (198 aa).

The involved in Mg(2+) ion dislocation from EF-Tu stretch occupies residues 81-84; the sequence is TDFV.

It belongs to the EF-Ts family.

It localises to the cytoplasm. Its function is as follows. Associates with the EF-Tu.GDP complex and induces the exchange of GDP to GTP. It remains bound to the aminoacyl-tRNA.EF-Tu.GTP complex up to the GTP hydrolysis stage on the ribosome. This Leptospira biflexa serovar Patoc (strain Patoc 1 / Ames) protein is Elongation factor Ts.